The following is a 366-amino-acid chain: Isocitrate dehydrogenase [NAD] subunit alpha, mitochondrial (366 aa).

Residues 1–27 constitute a mitochondrion transit peptide; the sequence is MAGPAWISKVSRLLGAFHNQKQVTRGF. K77 carries the post-translational modification N6-succinyllysine. T101 is subject to Phosphothreonine. Residues R115, R125, and R146 each coordinate substrate. K223 bears the N6-acetyllysine mark. Mg(2+) is bound by residues D233, D257, and D261. The residue at position 343 (K343) is an N6-acetyllysine; alternate. Position 343 is an N6-succinyllysine; alternate (K343). An N6-succinyllysine modification is found at K350.

It belongs to the isocitrate and isopropylmalate dehydrogenases family. In terms of assembly, heterooligomer of subunits alpha (IDH3A), beta (IDH3B), and gamma (IDH3G) in the apparent ratio of 2:1:1. The heterodimer containing one IDH3A and one IDH3B subunit and the heterodimer containing one IDH3A and one IDH3G subunit assemble into a heterotetramer (which contains two subunits of IDH3A, one of IDH3B and one of IDH3G) and further into the heterooctamer. Mg(2+) serves as cofactor. The cofactor is Mn(2+).

Its subcellular location is the mitochondrion. The catalysed reaction is D-threo-isocitrate + NAD(+) = 2-oxoglutarate + CO2 + NADH. Its activity is regulated as follows. The heterotetramer and the heterodimer composed of IDH3A and IDH3G subunits can be allosterically activated by citrate (CIT) or/and ADP, and the two activators can act independently or synergistically. The heterodimer composed of IDH3A and IDH3B subunits cannot be allosterically regulated and the allosteric regulation of the heterotetramer is through the IDH3G subunit and not the IDH3B subunit. The IDH3G subunit contains the allosteric site which consists of a CIT-binding site and an ADP-binding site, and the binding of CIT and ADP causes conformational changes at the allosteric site which are transmitted to the active site in the catalytic subunit (IDH3A) through a cascade of conformational changes at the heterodimer interface, leading to stabilization of the isocitrate-binding at the active site and thus activation of the enzyme. ATP can activate the heterotetramer and the heterodimer composed of IDH3A and IDH3G subunits at low concentrations but inhibits their activities at high concentrations, whereas ATP exhibits only inhibitory effect on the heterodimer composed of IDH3A and IDH3B subunits. Catalytic subunit of the enzyme which catalyzes the decarboxylation of isocitrate (ICT) into alpha-ketoglutarate. The heterodimer composed of the alpha (IDH3A) and beta (IDH3B) subunits and the heterodimer composed of the alpha (IDH3A) and gamma (IDH3G) subunits, have considerable basal activity but the full activity of the heterotetramer (containing two subunits of IDH3A, one of IDH3B and one of IDH3G) requires the assembly and cooperative function of both heterodimers. The protein is Isocitrate dehydrogenase [NAD] subunit alpha, mitochondrial of Bos taurus (Bovine).